The chain runs to 172 residues: Ribosome maturation factor RimM (172 aa).

In terms of domain architecture, PRC barrel spans 97–170; the sequence is ENEFYFHEII…KITIEVMEGL (74 aa).

It belongs to the RimM family. Binds ribosomal protein uS19.

The protein localises to the cytoplasm. In terms of biological role, an accessory protein needed during the final step in the assembly of 30S ribosomal subunit, possibly for assembly of the head region. Essential for efficient processing of 16S rRNA. May be needed both before and after RbfA during the maturation of 16S rRNA. It has affinity for free ribosomal 30S subunits but not for 70S ribosomes. The chain is Ribosome maturation factor RimM from Listeria monocytogenes serovar 1/2a (strain ATCC BAA-679 / EGD-e).